The chain runs to 377 residues: Cyclin-I (377 aa).

The segment at 356-377 (TDLSRQEGHASPCPPLQPVSVM) is disordered. The span at 367-377 (PCPPLQPVSVM) shows a compositional bias: pro residues.

Belongs to the cyclin family.

This is Cyclin-I (Ccni) from Mus musculus (Mouse).